Here is a 443-residue protein sequence, read N- to C-terminus: Exodeoxyribonuclease 7 large subunit (443 aa).

Belongs to the XseA family. In terms of assembly, heterooligomer composed of large and small subunits.

The protein resides in the cytoplasm. It catalyses the reaction Exonucleolytic cleavage in either 5'- to 3'- or 3'- to 5'-direction to yield nucleoside 5'-phosphates.. Its function is as follows. Bidirectionally degrades single-stranded DNA into large acid-insoluble oligonucleotides, which are then degraded further into small acid-soluble oligonucleotides. The protein is Exodeoxyribonuclease 7 large subunit of Stenotrophomonas maltophilia (strain R551-3).